We begin with the raw amino-acid sequence, 133 residues long: Small ribosomal subunit protein uS11 (133 aa).

This sequence belongs to the universal ribosomal protein uS11 family. Part of the 30S ribosomal subunit. Interacts with proteins S7 and S18. Binds to IF-3.

Functionally, located on the platform of the 30S subunit, it bridges several disparate RNA helices of the 16S rRNA. Forms part of the Shine-Dalgarno cleft in the 70S ribosome. This chain is Small ribosomal subunit protein uS11, found in Brevibacillus brevis (strain 47 / JCM 6285 / NBRC 100599).